The chain runs to 340 residues: NADH-quinone oxidoreductase subunit H (340 aa).

Transmembrane regions (helical) follow at residues 4-24 (TIGI…PLLI), 78-98 (YLFV…WAVI), 113-133 (VLYL…AGWA), 151-171 (VSYE…AGSM), 184-204 (MLHW…IAGI), 244-264 (SMIL…LSPF), 273-293 (IFFV…FLFV), and 316-336 (VLIP…VAHV).

The protein belongs to the complex I subunit 1 family. NDH-1 is composed of 14 different subunits. Subunits NuoA, H, J, K, L, M, N constitute the membrane sector of the complex.

It localises to the cell inner membrane. It carries out the reaction a quinone + NADH + 5 H(+)(in) = a quinol + NAD(+) + 4 H(+)(out). Its function is as follows. NDH-1 shuttles electrons from NADH, via FMN and iron-sulfur (Fe-S) centers, to quinones in the respiratory chain. The immediate electron acceptor for the enzyme in this species is believed to be ubiquinone. Couples the redox reaction to proton translocation (for every two electrons transferred, four hydrogen ions are translocated across the cytoplasmic membrane), and thus conserves the redox energy in a proton gradient. This subunit may bind ubiquinone. In Legionella pneumophila (strain Corby), this protein is NADH-quinone oxidoreductase subunit H.